The sequence spans 148 residues: Small ribosomal subunit protein uS7m (148 aa).

This sequence belongs to the universal ribosomal protein uS7 family. As to quaternary structure, part of the small ribosomal subunit.

Its subcellular location is the mitochondrion. Its function is as follows. One of the primary rRNA binding proteins, it binds directly to 18S rRNA where it nucleates assembly of the head domain of the small subunit. This chain is Small ribosomal subunit protein uS7m (RPS7), found in Triticum aestivum (Wheat).